The chain runs to 172 residues: Protein-export protein SecB (172 aa).

The protein belongs to the SecB family. Homotetramer, a dimer of dimers. One homotetramer interacts with 1 SecA dimer.

It is found in the cytoplasm. Functionally, one of the proteins required for the normal export of preproteins out of the cell cytoplasm. It is a molecular chaperone that binds to a subset of precursor proteins, maintaining them in a translocation-competent state. It also specifically binds to its receptor SecA. This is Protein-export protein SecB from Cupriavidus pinatubonensis (strain JMP 134 / LMG 1197) (Cupriavidus necator (strain JMP 134)).